Consider the following 824-residue polypeptide: Leucine--tRNA ligase (824 aa).

The short motif at 42–52 (PYPSGRIHMGH) is the 'HIGH' region element. The 'KMSKS' region signature appears at 581-585 (KMSKS). K584 lines the ATP pocket.

The protein belongs to the class-I aminoacyl-tRNA synthetase family.

The protein resides in the cytoplasm. The enzyme catalyses tRNA(Leu) + L-leucine + ATP = L-leucyl-tRNA(Leu) + AMP + diphosphate. The polypeptide is Leucine--tRNA ligase (Geobacter metallireducens (strain ATCC 53774 / DSM 7210 / GS-15)).